The sequence spans 230 residues: Fibrillarin-like rRNA/tRNA 2'-O-methyltransferase (230 aa).

Residues 87–88 (TT), 105–106 (EF), 130–131 (DA), and 150–153 (DVAQ) each bind S-adenosyl-L-methionine.

It belongs to the methyltransferase superfamily. Fibrillarin family. In terms of assembly, interacts with nop5. Component of box C/D small ribonucleoprotein (sRNP) particles that contain rpl7ae, FlpA and nop5, plus a guide RNA.

In terms of biological role, involved in pre-rRNA and tRNA processing. Utilizes the methyl donor S-adenosyl-L-methionine to catalyze the site-specific 2'-hydroxyl methylation of ribose moieties in rRNA and tRNA. Site specificity is provided by a guide RNA that base pairs with the substrate. Methylation occurs at a characteristic distance from the sequence involved in base pairing with the guide RNA. The protein is Fibrillarin-like rRNA/tRNA 2'-O-methyltransferase of Methanococcus maripaludis (strain C6 / ATCC BAA-1332).